A 166-amino-acid chain; its full sequence is 2-amino-4-hydroxy-6-hydroxymethyldihydropteridine pyrophosphokinase (166 aa).

Belongs to the HPPK family.

It carries out the reaction 6-hydroxymethyl-7,8-dihydropterin + ATP = (7,8-dihydropterin-6-yl)methyl diphosphate + AMP + H(+). The protein operates within cofactor biosynthesis; tetrahydrofolate biosynthesis; 2-amino-4-hydroxy-6-hydroxymethyl-7,8-dihydropteridine diphosphate from 7,8-dihydroneopterin triphosphate: step 4/4. Functionally, catalyzes the transfer of pyrophosphate from adenosine triphosphate (ATP) to 6-hydroxymethyl-7,8-dihydropterin, an enzymatic step in folate biosynthesis pathway. This is 2-amino-4-hydroxy-6-hydroxymethyldihydropteridine pyrophosphokinase (folK) from Streptococcus pyogenes serotype M18 (strain MGAS8232).